Here is a 2517-residue protein sequence, read N- to C-terminus: Protein capicua homolog (2517 aa).

6 disordered regions span residues 1–197 (MKPM…SGSY), 300–325 (LSPG…HREP), 342–483 (PWEP…KYKK), 531–579 (EMEG…RGDS), 608–640 (SSRS…FGFR), and 658–767 (VRSR…FRAV). The segment covering 57–67 (EEAEEGEEEEA) has biased composition (acidic residues). The segment covering 91–101 (EDPKGDGEAGR) has biased composition (basic and acidic residues). Composition is skewed to low complexity over residues 158-167 (TSTRSSSTDT) and 300-313 (LSPG…LPGS). Positions 396-405 (HCEEGEEKHP) are enriched in basic and acidic residues. Pro residues predominate over residues 414-428 (LPLPPPQLLSPPPKS). Residues 451 to 477 (GSRSSSVASLEKGTAPAARARTPLTAA) are compositionally biased toward low complexity. Residues 608-619 (SSRSGTPSFSPV) are compositionally biased toward polar residues. The span at 677–686 (DLGPHPPPPA) shows a compositional bias: pro residues. Polar residues predominate over residues 698 to 707 (TFQTNLTFTV). Positions 726-735 (GAPGAGGGGA) are enriched in gly residues. Phosphoserine occurs at positions 776 and 780. 7 disordered regions span residues 812 to 842 (IVRN…PGRG), 955 to 1110 (PSQP…DHIR), 1179 to 1220 (CNKD…APGV), 1235 to 1274 (SDTK…SLDG), 1290 to 1347 (SGPA…TSDE), 1379 to 1539 (RVTD…ILQT), and 1595 to 1628 (IASK…RVPG). Positions 937-955 (EPRSVAVFPWHSLVPFLAP) are interaction with ATXN1. The segment covering 959–981 (DPSVQPSEAQQPASHPVASNQSK) has biased composition (polar residues). A phosphoserine mark is found at Ser-1055 and Ser-1082. Composition is skewed to basic and acidic residues over residues 1087–1110 (PKER…DHIR), 1179–1188 (CNKDRKKSSS), and 1200–1209 (GHKETRERSM). Arg-1099 is subject to Omega-N-methylarginine. A DNA-binding region (HMG box) is located at residues 1109–1177 (IRRPMNAFMI…AHFKAHPDWK (69 aa)). Phosphoserine is present on Ser-1186. Residues 1235-1245 (SDTKAPGSSSC) show a composition bias toward polar residues. A Phosphoserine modification is found at Ser-1271. Positions 1305–1323 (GAPGPFAAPGEGGALAATG) are enriched in low complexity. Phosphoserine occurs at positions 1340, 1345, and 1405. Positions 1418 to 1430 (PLDPEPPGPPDPP) are enriched in pro residues. Residues 1439 to 1456 (SAPSSSASSPASSSASAA) show a composition bias toward low complexity. Positions 1457–1474 (TSFSLGSGTFKAQESGQG) are enriched in polar residues. A phosphoserine mark is found at Ser-1609, Ser-1630, and Ser-1648. Arg-1772 is subject to Asymmetric dimethylarginine. Positions 1799–1818 (QSVPSAPPPKAQSVSPVQAP) are disordered. At Arg-1843 the chain carries Omega-N-methylarginine. 3 disordered regions span residues 2039–2064 (AATI…FPSA), 2100–2342 (SFEA…AKCE), and 2430–2517 (AATP…ATGR). Over residues 2051–2064 (ATATPAPTSPFPSA) the composition is skewed to low complexity. Pro residues-rich tracts occupy residues 2110–2119 (GPAPRQPLEP) and 2136–2145 (PTPPAPPPLP). Residues 2146–2155 (ETWTPTARSS) show a composition bias toward low complexity. Lys-2177 is subject to N6-acetyllysine. A compositionally biased stretch (pro residues) spans 2198-2209 (PPTPPSPAPAPA). Thr-2200 is modified (phosphothreonine). At Ser-2203 the chain carries Phosphoserine. Residues 2210–2225 (VAPGGSSESSSGRAAG) are compositionally biased toward low complexity. The span at 2249–2278 (KTFDSVDNRVLSEVDFEERFAELPEFRPEE) shows a compositional bias: basic and acidic residues. Ser-2260, Ser-2282, Ser-2287, Ser-2291, Ser-2298, and Ser-2306 each carry phosphoserine. Residue Thr-2307 is modified to Phosphothreonine. Residues Ser-2311 and Ser-2318 each carry the phosphoserine modification. A compositionally biased stretch (pro residues) spans 2457-2469 (APTPSPAGGPDPT). Phosphoserine is present on Ser-2504.

In terms of assembly, found in a complex with ATXN1 and ATXN1L. Interacts with ATXN1. Expressed in fetal brain.

The protein localises to the nucleus. In terms of biological role, transcriptional repressor which plays a role in development of the central nervous system (CNS). In concert with ATXN1 and ATXN1L, involved in brain development. This chain is Protein capicua homolog (CIC), found in Homo sapiens (Human).